The chain runs to 145 residues: L-alanine exporter AlaE (145 aa).

4 consecutive transmembrane segments (helical) span residues 16-36 (FALVVYCFIIGMAIEIMLSGM), 42-62 (LSSRLLSIPVNIAIAWPYGLY), 86-106 (LFAYVSFQSPVYAAILWVIGA), and 111-131 (ILTAVTSNLVISMVMGVTYGY).

Belongs to the AlaE exporter family.

Its subcellular location is the cell inner membrane. In terms of biological role, exports L-alanine. This chain is L-alanine exporter AlaE, found in Pectobacterium parmentieri (strain WPP163) (Pectobacterium wasabiae (strain WPP163)).